Reading from the N-terminus, the 372-residue chain is Alanine racemase (372 aa).

K33 (proton acceptor; specific for D-alanine) is an active-site residue. N6-(pyridoxal phosphate)lysine is present on K33. R131 is a binding site for substrate. The active-site Proton acceptor; specific for L-alanine is Y261. M309 lines the substrate pocket.

This sequence belongs to the alanine racemase family. Pyridoxal 5'-phosphate serves as cofactor.

It catalyses the reaction L-alanine = D-alanine. The protein operates within amino-acid biosynthesis; D-alanine biosynthesis; D-alanine from L-alanine: step 1/1. Functionally, catalyzes the interconversion of L-alanine and D-alanine. May also act on other amino acids. The chain is Alanine racemase (alr) from Salinispora arenicola (strain CNS-205).